We begin with the raw amino-acid sequence, 415 residues long: Gamma-glutamyl phosphate reductase (415 aa).

Belongs to the gamma-glutamyl phosphate reductase family.

It localises to the cytoplasm. The enzyme catalyses L-glutamate 5-semialdehyde + phosphate + NADP(+) = L-glutamyl 5-phosphate + NADPH + H(+). The protein operates within amino-acid biosynthesis; L-proline biosynthesis; L-glutamate 5-semialdehyde from L-glutamate: step 2/2. Catalyzes the NADPH-dependent reduction of L-glutamate 5-phosphate into L-glutamate 5-semialdehyde and phosphate. The product spontaneously undergoes cyclization to form 1-pyrroline-5-carboxylate. The sequence is that of Gamma-glutamyl phosphate reductase from Bacillus cereus (strain AH187).